A 386-amino-acid polypeptide reads, in one-letter code: Protein phosphatase methylesterase 1 (386 aa).

The tract at residues 20-48 (ILEKLKGGQEPNSNEEGSDSIGDLPSLKN) is disordered. Active-site residues include serine 194, aspartate 222, and histidine 348.

Belongs to the AB hydrolase superfamily.

The catalysed reaction is [phosphatase 2A protein]-C-terminal L-leucine methyl ester + H2O = [phosphatase 2A protein]-C-terminal L-leucine + methanol + H(+). Demethylates proteins that have been reversibly carboxymethylated. Demethylates the phosphatase PP2A catalytic subunit. The sequence is that of Protein phosphatase methylesterase 1 (PPE1) from Candida glabrata (strain ATCC 2001 / BCRC 20586 / JCM 3761 / NBRC 0622 / NRRL Y-65 / CBS 138) (Yeast).